The sequence spans 169 residues: Oleosin Cor a 15 (169 aa).

A run of 2 helical transmembrane segments spans residues 38 to 58 (IAVV…GLTF) and 70 to 90 (PLFV…GLAV). A Proline-knot motif is present at residues 70-81 (PLFVLCSPVLVP). 2 stretches are compositionally biased toward basic and acidic residues: residues 122–131 (QMEHAKRRAQ) and 160–169 (EGGRGEEKKT). The disordered stretch occupies residues 122–169 (QMEHAKRRAQDTAGHLGQKARETGQTVTGKGQEAGKTLEGGRGEEKKT).

The protein belongs to the oleosin family. Expressed in seeds (at protein level).

The protein localises to the lipid droplet. It is found in the membrane. In terms of biological role, may have a structural role to stabilize the lipid body during desiccation of the seed by preventing coalescence of the oil. Probably interacts with both lipid and phospholipid moieties of lipid bodies. May also provide recognition signals for specific lipase anchorage in lipolysis during seedling growth. The polypeptide is Oleosin Cor a 15 (Corylus avellana (European hazel)).